The sequence spans 79 residues: U-actitoxin-Avd8a (79 aa).

Positions 1–19 (MKSLVIVFVVLLGVAMISA) are cleaved as a signal peptide. The propeptide occupies 20–36 (NEEELLAILQDQRNDAR).

The protein belongs to the sea anemone 8 toxin family.

The protein resides in the secreted. The protein localises to the nematocyst. This chain is U-actitoxin-Avd8a, found in Anemonia viridis (Snakelocks anemone).